The following is a 167-amino-acid chain: MAPIKRGDRFPTTDDVYYIPPEGGEPGAFELSKFVKTKKFVVVSVPGAFTPPCTEQHLPGYIKNLPRILSKGVDFVLVITQNDPFVLKGWKKELGAADAKKLIFVSDPNLKLTKKLGSTIDLSSIGLGTRSGRLALIVNRSGIVEYAAIENGGEVDVSTAQKIIAKL.

The 164-residue stretch at 4–167 folds into the Thioredoxin domain; sequence IKRGDRFPTT…STAQKIIAKL (164 aa). The active-site Cysteine sulfenic acid (-SOH) intermediate is Cys-53. The Microbody targeting signal signature appears at 165-167; that stretch reads AKL.

It belongs to the peroxiredoxin family. Prx5 subfamily.

It is found in the peroxisome membrane. The catalysed reaction is a hydroperoxide + [thioredoxin]-dithiol = an alcohol + [thioredoxin]-disulfide + H2O. In terms of biological role, thiol-specific peroxidase that catalyzes the reduction of hydrogen peroxide and organic hydroperoxides to water and alcohols, respectively. Plays a role in cell protection against oxidative stress by detoxifying peroxides and as sensor of hydrogen peroxide-mediated signaling events. This Candida boidinii (Yeast) protein is Putative peroxiredoxin-B (PMPB).